The following is a 270-amino-acid chain: Phosphatidylglycerol--prolipoprotein diacylglyceryl transferase (270 aa).

A run of 7 helical transmembrane segments spans residues 14–34 (VIFE…LLGF), 60–80 (LLFN…VLFY), 95–115 (VWEG…AMLI), 128–148 (ADFV…GNFI), 176–196 (SQLY…NWYI), 202–222 (IGAT…IVEF), and 238–258 (ISMG…IMLV). Arginine 143 contacts a 1,2-diacyl-sn-glycero-3-phospho-(1'-sn-glycerol).

This sequence belongs to the Lgt family.

The protein localises to the cell inner membrane. The enzyme catalyses L-cysteinyl-[prolipoprotein] + a 1,2-diacyl-sn-glycero-3-phospho-(1'-sn-glycerol) = an S-1,2-diacyl-sn-glyceryl-L-cysteinyl-[prolipoprotein] + sn-glycerol 1-phosphate + H(+). The protein operates within protein modification; lipoprotein biosynthesis (diacylglyceryl transfer). In terms of biological role, catalyzes the transfer of the diacylglyceryl group from phosphatidylglycerol to the sulfhydryl group of the N-terminal cysteine of a prolipoprotein, the first step in the formation of mature lipoproteins. This Pasteurella multocida (strain Pm70) protein is Phosphatidylglycerol--prolipoprotein diacylglyceryl transferase.